A 378-amino-acid polypeptide reads, in one-letter code: Putative glutamate--cysteine ligase 2 (378 aa).

This sequence belongs to the glutamate--cysteine ligase type 2 family. YbdK subfamily.

It catalyses the reaction L-cysteine + L-glutamate + ATP = gamma-L-glutamyl-L-cysteine + ADP + phosphate + H(+). ATP-dependent carboxylate-amine ligase which exhibits weak glutamate--cysteine ligase activity. This is Putative glutamate--cysteine ligase 2 from Jannaschia sp. (strain CCS1).